Here is a 200-residue protein sequence, read N- to C-terminus: Probable molybdenum cofactor guanylyltransferase (200 aa).

GTP contacts are provided by residues 9–11 (LAG), Lys21, Asp69, and Asp100. A Mg(2+)-binding site is contributed by Asp100.

The protein belongs to the MobA family. The cofactor is Mg(2+).

Its subcellular location is the cytoplasm. The enzyme catalyses Mo-molybdopterin + GTP + H(+) = Mo-molybdopterin guanine dinucleotide + diphosphate. Its function is as follows. Transfers a GMP moiety from GTP to Mo-molybdopterin (Mo-MPT) cofactor (Moco or molybdenum cofactor) to form Mo-molybdopterin guanine dinucleotide (Mo-MGD) cofactor. This is Probable molybdenum cofactor guanylyltransferase from Bacillus cereus (strain ATCC 10987 / NRS 248).